Reading from the N-terminus, the 351-residue chain is Molybdate-binding protein MolA (351 aa).

Residues 1-21 (MKLKSLLIACLLSSLSFSALA) form the signal peptide. Positions 41–322 (RAVVLQHQTL…WLAKALYPQR (282 aa)) constitute a Fe/B12 periplasmic-binding domain. Residues 47 to 48 (HQ), Tyr-217, Arg-264, and 300 to 301 (GY) each bind molybdate.

Belongs to the bacterial solute-binding protein 8 family. In terms of assembly, the complex is composed of two ATP-binding proteins (MolC), two transmembrane proteins (MolB) and a solute-binding protein (MolA).

The protein localises to the periplasm. With respect to regulation, the MolBCA complex shows a decrease in affinity in the presence of increasing concentrations of substrate and nucleotide. Functionally, part of the ABC transporter complex MolBCA involved in molybdate import. Functions as a low-affinity molybdate transporter. Binds to both molybdate and tungstate, but not to sulfate or phosphate. The protein is Molybdate-binding protein MolA of Haemophilus influenzae (strain ATCC 51907 / DSM 11121 / KW20 / Rd).